Here is an 85-residue protein sequence, read N- to C-terminus: MSSGGLLLLLGLLTLWAELTPVSSRKRHPDCDKPPDTKICQTVVRAFYYKPSAKRCVQFRYGGCNGNGNHFKSDHLCRCECLEYP.

Positions 1 to 24 (MSSGGLLLLLGLLTLWAELTPVSS) are cleaved as a signal peptide. The BPTI/Kunitz inhibitor domain occupies 31–81 (CDKPPDTKICQTVVRAFYYKPSAKRCVQFRYGGCNGNGNHFKSDHLCRCEC). Disulfide bonds link Cys-31/Cys-81, Cys-40/Cys-64, and Cys-56/Cys-77.

Belongs to the venom Kunitz-type family. Heterodimer; disulfide-linked. The A chain has phospholipase A2 activity and the B chain shows homology with the basic protease inhibitors. Expressed by the venom gland.

Its subcellular location is the secreted. Beta-bungarotoxin is a presynaptic neurotoxin of the venom. The B chain is homologous to venom basic protease inhibitors but has no protease inhibitor activity and is non-toxic. The chain is Kunitz-type serine protease inhibitor homolog beta-bungarotoxin B2a chain from Bungarus candidus (Malayan krait).